The sequence spans 492 residues: Fascin-2 (492 aa).

This sequence belongs to the fascin family. In terms of tissue distribution, localized specifically in the outer and inner segments of the photoreceptor cells in the retina.

It localises to the cytoplasm. It is found in the cytoskeleton. The protein localises to the cell projection. Its subcellular location is the stereocilium. Its function is as follows. Acts as an actin bundling protein. May play a pivotal role in photoreceptor cell-specific events, such as disk morphogenesis. This is Fascin-2 (FSCN2) from Homo sapiens (Human).